The following is a 50-amino-acid chain: U23-theraphotoxin-Cg1a 2 (50 aa).

Cystine bridges form between Cys-22–Cys-36, Cys-29–Cys-41, and Cys-35–Cys-47.

It belongs to the neurotoxin 10 (Hwtx-1) family. 64 (Jztx-20) subfamily. Expressed by the venom gland.

The protein localises to the secreted. Probable ion channel inhibitor. The chain is U23-theraphotoxin-Cg1a 2 from Chilobrachys guangxiensis (Chinese earth tiger tarantula).